Reading from the N-terminus, the 42-residue chain is Photosystem I reaction center subunit IX (42 aa).

The chain crosses the membrane as a helical span at residues 7–27; the sequence is YLSTAPVLAAIWFAILAGLLI.

The protein belongs to the PsaJ family.

The protein localises to the plastid. The protein resides in the chloroplast thylakoid membrane. In terms of biological role, may help in the organization of the PsaE and PsaF subunits. This chain is Photosystem I reaction center subunit IX, found in Zygnema circumcarinatum (Green alga).